The following is a 206-amino-acid chain: Outer-membrane lipoprotein carrier protein (206 aa).

Residues 1–21 (MKKLLCAVLLSPLLYSNAVLA) form the signal peptide.

It belongs to the LolA family. Monomer.

Its subcellular location is the periplasm. Its function is as follows. Participates in the translocation of lipoproteins from the inner membrane to the outer membrane. Only forms a complex with a lipoprotein if the residue after the N-terminal Cys is not an aspartate (The Asp acts as a targeting signal to indicate that the lipoprotein should stay in the inner membrane). The sequence is that of Outer-membrane lipoprotein carrier protein from Shewanella sp. (strain MR-7).